Here is a 302-residue protein sequence, read N- to C-terminus: Rhomboid-related protein 2 (302 aa).

Residues 1-38 (MAVAHEMEMESVNLNMEREGKEEPEEEKMKGNGEGKDF) form a disordered region. Over residues 16–38 (MEREGKEEPEEEKMKGNGEGKDF) the composition is skewed to basic and acidic residues. Helical transmembrane passes span 71 to 91 (PLFI…YAVW), 127 to 147 (LVHA…VLGI), 158 to 178 (VGLV…IFDP), 182 to 202 (LVGA…NVIV), 211 to 231 (FGIV…GFAL), 244 to 264 (VSFA…YTVF), and 277 to 297 (FWIA…FNIF). S186 serves as the catalytic Nucleophile. The active site involves H249.

Belongs to the peptidase S54 family. In terms of processing, proteolytic processing of the proenzyme produces an N- and a C-terminal fragment. The processing is required for activation of the protease.

The protein localises to the cell membrane. It carries out the reaction Cleaves type-1 transmembrane domains using a catalytic dyad composed of serine and histidine that are contributed by different transmembrane domains.. Functionally, involved in regulated intramembrane proteolysis and the subsequent release of functional polypeptides from their membrane anchors. Known substrate: EFNB3. The protein is Rhomboid-related protein 2 (Rhbdl2) of Mus musculus (Mouse).